The chain runs to 114 residues: UPF0342 protein SE_1526 (114 aa).

The protein belongs to the UPF0342 family.

The chain is UPF0342 protein SE_1526 from Staphylococcus epidermidis (strain ATCC 12228 / FDA PCI 1200).